A 246-amino-acid polypeptide reads, in one-letter code: 1-(5-phosphoribosyl)-5-[(5-phosphoribosylamino)methylideneamino] imidazole-4-carboxamide isomerase (246 aa).

D8 functions as the Proton acceptor in the catalytic mechanism. D129 serves as the catalytic Proton donor.

Belongs to the HisA/HisF family.

It localises to the cytoplasm. The enzyme catalyses 1-(5-phospho-beta-D-ribosyl)-5-[(5-phospho-beta-D-ribosylamino)methylideneamino]imidazole-4-carboxamide = 5-[(5-phospho-1-deoxy-D-ribulos-1-ylimino)methylamino]-1-(5-phospho-beta-D-ribosyl)imidazole-4-carboxamide. The protein operates within amino-acid biosynthesis; L-histidine biosynthesis; L-histidine from 5-phospho-alpha-D-ribose 1-diphosphate: step 4/9. The chain is 1-(5-phosphoribosyl)-5-[(5-phosphoribosylamino)methylideneamino] imidazole-4-carboxamide isomerase from Nitrobacter hamburgensis (strain DSM 10229 / NCIMB 13809 / X14).